We begin with the raw amino-acid sequence, 423 residues long: Adenylosuccinate synthetase (423 aa).

GTP is bound by residues G12–K18 and G40–T42. D13 functions as the Proton acceptor in the catalytic mechanism. Positions 13 and 40 each coordinate Mg(2+). Residues D13–K16, N38–H41, T129, R143, Q221, T236, and R300 each bind IMP. H41 serves as the catalytic Proton donor. Position 296-302 (A296–R302) interacts with substrate. GTP-binding positions include R302, K328–D330, and S408–G410.

Belongs to the adenylosuccinate synthetase family. In terms of assembly, homodimer. Requires Mg(2+) as cofactor.

The protein localises to the cytoplasm. The catalysed reaction is IMP + L-aspartate + GTP = N(6)-(1,2-dicarboxyethyl)-AMP + GDP + phosphate + 2 H(+). Its pathway is purine metabolism; AMP biosynthesis via de novo pathway; AMP from IMP: step 1/2. Its function is as follows. Plays an important role in the de novo pathway of purine nucleotide biosynthesis. Catalyzes the first committed step in the biosynthesis of AMP from IMP. The chain is Adenylosuccinate synthetase from Parabacteroides distasonis (strain ATCC 8503 / DSM 20701 / CIP 104284 / JCM 5825 / NCTC 11152).